The chain runs to 474 residues: Mitochondrial import inner membrane translocase subunit TIM44-1 (474 aa).

The N-terminal 54 residues, 1–54 (MAIRKIIRDLLITKQPLLRQLFHQRVLRANARSEFLPAIGYTSHRRFSVFTEFS), are a transit peptide targeting the mitochondrion. Positions 68–88 (ERTVKELKERTEEFKGVTEDL) form a coiled coil. Residues 132–143 (VKESFKLGKEEN) show a composition bias toward basic and acidic residues. The disordered stretch occupies residues 132–165 (VKESFKLGKEENAESASSSGTRASQGEKQQSGST). Positions 145-165 (ESASSSGTRASQGEKQQSGST) are enriched in polar residues.

Belongs to the Tim44 family. In terms of assembly, probable component of the PAM complex at least composed of a mitochondrial HSP70 protein, TIMM44 and TIMM14. The complex interacts with the TIMM23 component of the TIM17:23 complex. In terms of tissue distribution, expressed in roots, flowers, young cotyledons and leaves.

It is found in the mitochondrion inner membrane. Functionally, essential component of the PAM complex, a complex required for the translocation of transit peptide-containing proteins from the inner membrane into the mitochondrial matrix in an ATP-dependent manner. Recruits mitochondrial HSP70 to drive protein translocation into the matrix using ATP as an energy source. The sequence is that of Mitochondrial import inner membrane translocase subunit TIM44-1 (TIM44-1) from Arabidopsis thaliana (Mouse-ear cress).